The sequence spans 147 residues: Hemoglobin subunit beta-1 (147 aa).

N-acetylvaline is present on Val2. One can recognise a Globin domain in the interval 3–147 (HLTDAEKAAV…VATALAHKYH (145 aa)). The residue at position 18 (Lys18) is an N6-succinyllysine. Residues Ser21, Ser45, and Ser51 each carry the phosphoserine modification. Residue Lys60 is modified to N6-succinyllysine. Heme b is bound by residues His64 and His93. Arg105 carries the asymmetric dimethylarginine modification. Thr124 carries the phosphothreonine modification.

Belongs to the globin family. Heterotetramer of two alpha chains and two beta chains. As to expression, red blood cells.

In terms of biological role, involved in oxygen transport from the lung to the various peripheral tissues. The polypeptide is Hemoglobin subunit beta-1 (Hbb-b1) (Mus musculus (Mouse)).